The primary structure comprises 721 residues: Polyribonucleotide nucleotidyltransferase (721 aa).

Mg(2+) contacts are provided by aspartate 495 and aspartate 501. The KH domain occupies 562-621 (PRLLSFRIDPELIGTVIGPGGRTIKGITERTNTKIDIEDSGIVTIASHDGAAAEEAQKII). The S1 motif domain occupies 631–699 (GEMFSGSITR…NRGRINLTLR (69 aa)). Positions 700–721 (GVPQSGESTEVEPQPTPVAPLS) are disordered.

It belongs to the polyribonucleotide nucleotidyltransferase family. The cofactor is Mg(2+).

It localises to the cytoplasm. It catalyses the reaction RNA(n+1) + phosphate = RNA(n) + a ribonucleoside 5'-diphosphate. Functionally, involved in mRNA degradation. Catalyzes the phosphorolysis of single-stranded polyribonucleotides processively in the 3'- to 5'-direction. In Synechococcus sp. (strain CC9902), this protein is Polyribonucleotide nucleotidyltransferase.